A 311-amino-acid chain; its full sequence is Putative UPF0607 protein ENSP00000382826 (311 aa).

The span at 48 to 61 shows a compositional bias: basic and acidic residues; the sequence is AEEPKEATEVKDQV. Disordered stretches follow at residues 48–99, 186–229, and 291–311; these read AEEP…WYNP, GLLM…PLQL, and RKQL…GSCL. The span at 78–97 shows a compositional bias: polar residues; the sequence is EAASTSRPLETQGNLTSSWY. Composition is skewed to basic residues over residues 213-222 and 291-305; these read AGHRSRKRKL and RKQL…RQGR.

Belongs to the UPF0607 family.

The polypeptide is Putative UPF0607 protein ENSP00000382826 (Homo sapiens (Human)).